Consider the following 552-residue polypeptide: Chromosomal replication initiator protein DnaA (552 aa).

Residues 1–90 (MWNETWNEIT…FTVAVTVDPT (90 aa)) form a domain I, interacts with DnaA modulators region. The segment at 90-210 (TLDVIQDLPH…KPAHDPDRNG (121 aa)) is domain II. Residues 113-213 (EHPHYSPVSQ…HDPDRNGSLN (101 aa)) form a disordered region. The span at 155-170 (PQPSQSSQSAQQQPAQ) shows a compositional bias: low complexity. Positions 211-427 (SLNPRYTFDT…GAFIRVSAYA (217 aa)) are domain III, AAA+ region. ATP is bound by residues Gly-255, Gly-257, Lys-258, and Thr-259. The segment at 428–552 (SLNEAPINMA…TQQIKSSDRA (125 aa)) is domain IV, binds dsDNA.

The protein belongs to the DnaA family. As to quaternary structure, oligomerizes as a right-handed, spiral filament on DNA at oriC.

It is found in the cytoplasm. In terms of biological role, plays an essential role in the initiation and regulation of chromosomal replication. ATP-DnaA binds to the origin of replication (oriC) to initiate formation of the DNA replication initiation complex once per cell cycle. Binds the DnaA box (a 9 base pair repeat at the origin) and separates the double-stranded (ds)DNA. Forms a right-handed helical filament on oriC DNA; dsDNA binds to the exterior of the filament while single-stranded (ss)DNA is stabiized in the filament's interior. The ATP-DnaA-oriC complex binds and stabilizes one strand of the AT-rich DNA unwinding element (DUE), permitting loading of DNA polymerase. After initiation quickly degrades to an ADP-DnaA complex that is not apt for DNA replication. Binds acidic phospholipids. The chain is Chromosomal replication initiator protein DnaA from Corynebacterium diphtheriae (strain ATCC 700971 / NCTC 13129 / Biotype gravis).